Consider the following 215-residue polypeptide: 3-isopropylmalate dehydratase small subunit (215 aa).

The protein belongs to the LeuD family. LeuD type 1 subfamily. Heterodimer of LeuC and LeuD.

It catalyses the reaction (2R,3S)-3-isopropylmalate = (2S)-2-isopropylmalate. It functions in the pathway amino-acid biosynthesis; L-leucine biosynthesis; L-leucine from 3-methyl-2-oxobutanoate: step 2/4. Functionally, catalyzes the isomerization between 2-isopropylmalate and 3-isopropylmalate, via the formation of 2-isopropylmaleate. The polypeptide is 3-isopropylmalate dehydratase small subunit (Xanthomonas axonopodis pv. citri (strain 306)).